Here is a 459-residue protein sequence, read N- to C-terminus: Nuclear distribution protein PAC1-2 (459 aa).

Residues 56–83 (TSIVRLQKKIMDLESRNAALQTELANLT) adopt a coiled-coil conformation. 8 WD repeats span residues 108–149 (SHRD…RTVK), 151–191 (HTRA…KNIR), 195–244 (GHDH…KTLR), 246–284 (HTAW…SDHK), 306–348 (QYLA…LGTL), 350–389 (GHDN…KCVK), 394–438 (AHER…DTPD), and 440–459 (QVRC…VFAD).

The protein belongs to the WD repeat LIS1/nudF family. In terms of assembly, self-associates. Interacts with NDL1 and dynein.

Its subcellular location is the cytoplasm. The protein resides in the cytoskeleton. The protein localises to the spindle pole. In terms of biological role, positively regulates the activity of the minus-end directed microtubule motor protein dynein. May enhance dynein-mediated microtubule sliding by targeting dynein to the microtubule plus end. Required for nuclear migration during vegetative growth as well as development. Required for retrograde early endosome (EE) transport from the hyphal tip. Required for localization of dynein to the mitotic spindle poles. Recruits additional proteins to the dynein complex at SPBs. The chain is Nuclear distribution protein PAC1-2 from Uncinocarpus reesii (strain UAMH 1704).